Reading from the N-terminus, the 56-residue chain is Large ribosomal subunit protein bL32 (56 aa).

Over residues 1 to 20 (MAVPKKKKSKSKRNHRHAVW) the composition is skewed to basic residues. Residues 1-21 (MAVPKKKKSKSKRNHRHAVWK) are disordered.

Belongs to the bacterial ribosomal protein bL32 family.

The protein is Large ribosomal subunit protein bL32 of Prochlorococcus marinus (strain MIT 9312).